Consider the following 283-residue polypeptide: ATP synthase gamma chain (283 aa).

The protein belongs to the ATPase gamma chain family. In terms of assembly, F-type ATPases have 2 components, CF(1) - the catalytic core - and CF(0) - the membrane proton channel. CF(1) has five subunits: alpha(3), beta(3), gamma(1), delta(1), epsilon(1). CF(0) has three main subunits: a, b and c.

The protein localises to the cell membrane. In terms of biological role, produces ATP from ADP in the presence of a proton gradient across the membrane. The gamma chain is believed to be important in regulating ATPase activity and the flow of protons through the CF(0) complex. This Clostridium perfringens (strain ATCC 13124 / DSM 756 / JCM 1290 / NCIMB 6125 / NCTC 8237 / Type A) protein is ATP synthase gamma chain.